The sequence spans 815 residues: Echinoderm microtubule-associated protein-like 1 (815 aa).

The stretch at 31 to 72 forms a coiled coil; that stretch reads SMEVTDRIASLEQRVQMQEDDIQLLKSALADVVRRLNITEEQ. The segment at 77 to 179 is disordered; that stretch reads NRKGPTKARP…NSESKPKEPV (103 aa). A compositionally biased stretch (polar residues) spans 92 to 101; it reads PLRTTVNNGT. A Phosphoserine modification is found at S113. Residues 126-138 show a composition bias toward polar residues; sequence TKSNIKRTSSSER. Positions 143-153 are enriched in basic and acidic residues; that stretch reads GRRESNGDSRG. Positions 156 to 168 are enriched in low complexity; the sequence is NRTGSTSSSSSGK. The tandem atypical propeller in EMLs stretch occupies residues 176 to 815; the sequence is KEPVFSAEEG…DTSIMQWRVI (640 aa). 12 WD repeats span residues 261–310, 315–358, 363–400, 409–446, 450–489, 493–530, 535–572, 578–613, 617–655, 664–701, 709–768, and 775–814; these read EQLQ…IWDS, TLHV…VWDW, KLADVKCSNEAVFAADFHPTDTNIIVTCGKSHLYFWTL, QGLFEKQEKPKFVLCVTFSENGDTITGDSSGNILVWGK, RISYAVQGAHEGGIFALCMLRDGTLVSGGGKDRKLISWSG, KLRKTEIPEQFGPIRTVAEGKGDVILIGTTRNFVLQGT, FTPITQGHTDELWGLAIHASKSQFLTCGHDKHATLWDA, VWDKIIEDPAQSSGFHPSGSVVAVGTLTGRWFVFDT, DLVTVHTDGNEQLSVMRYSPDGNFLAIGSHDNCIYIYGV, RVGKCSGHSSFITHLDWSVNSQFLVSNSGDYEILYWVP, SVET…LFSY, and APSHIYGGHSSHVTNVDFLCEDSHLISTGGKDTSIMQWRV.

This sequence belongs to the WD repeat EMAP family. As to quaternary structure, homotrimer; self-association is mediated by the N-terminal coiled coil. Does not interact with EML3. Binds repolymerizing microtubules. Binds unpolymerized tubulins via its WD repeat region. Interacts with TASOR. Ubiquitous; expressed in most tissues with the exception of thymus and peripheral blood lymphocytes.

The protein resides in the cytoplasm. It is found in the perinuclear region. It localises to the cytoskeleton. Its function is as follows. Modulates the assembly and organization of the microtubule cytoskeleton, and probably plays a role in regulating the orientation of the mitotic spindle and the orientation of the plane of cell division. Required for normal proliferation of neuronal progenitor cells in the developing brain and for normal brain development. Does not affect neuron migration per se. In Homo sapiens (Human), this protein is Echinoderm microtubule-associated protein-like 1 (EML1).